We begin with the raw amino-acid sequence, 261 residues long: Ribosomal RNA small subunit methyltransferase J (261 aa).

S-adenosyl-L-methionine is bound by residues 101 to 102, 117 to 118, 153 to 154, and Asp-176; these read RD, ER, and SS.

It belongs to the methyltransferase superfamily. RsmJ family.

The protein resides in the cytoplasm. The catalysed reaction is guanosine(1516) in 16S rRNA + S-adenosyl-L-methionine = N(2)-methylguanosine(1516) in 16S rRNA + S-adenosyl-L-homocysteine + H(+). Specifically methylates the guanosine in position 1516 of 16S rRNA. The polypeptide is Ribosomal RNA small subunit methyltransferase J (Vibrio cholerae serotype O1 (strain ATCC 39315 / El Tor Inaba N16961)).